Reading from the N-terminus, the 882-residue chain is Bifunctional heparan sulfate N-deacetylase/N-sulfotransferase 1 (882 aa).

The Cytoplasmic segment spans residues methionine 1–glutamine 17. The segment at methionine 1–phenylalanine 169 is sufficient for localization to Golgi membrane. Residues alanine 18–leucine 38 traverse the membrane as a helical; Signal-anchor for type II membrane protein segment. Topologically, residues tyrosine 39–arginine 882 are lumenal. The interval glycine 40–glutamate 598 is heparan sulfate N-deacetylase 1. 3 N-linked (GlcNAc...) asparagine glycosylation sites follow: asparagine 231, asparagine 351, and asparagine 401. The interval lysine 599–arginine 882 is heparan sulfate N-sulfotransferase 1. Lysine 614 acts as the For sulfotransferase activity in catalysis. Lysine 614–threonine 618 contacts adenosine 3',5'-bisphosphate. An N-linked (GlcNAc...) asparagine glycan is attached at asparagine 667. Adenosine 3',5'-bisphosphate is bound by residues serine 712 and tryptophan 817. A disulfide bridge connects residues cysteine 818 and cysteine 828. Lysine 833 to tyrosine 837 contributes to the adenosine 3',5'-bisphosphate binding site.

Belongs to the sulfotransferase 1 family. NDST subfamily. Monomer. Interacts with heparan sulfate co-polymerase subunits EXT1 and EXT2. As to expression, widely expressed in adult and throughout development.

The protein resides in the golgi apparatus membrane. Its subcellular location is the golgi apparatus. It is found in the trans-Golgi network membrane. It localises to the cis-Golgi network membrane. The enzyme catalyses N-acetyl-alpha-D-glucosaminyl-[heparan sulfate](n) + H2O = alpha-D-glucosaminyl-[heparan sulfate](n) + acetate. The catalysed reaction is alpha-D-glucosaminyl-[heparan sulfate](n) + 3'-phosphoadenylyl sulfate = N-sulfo-alpha-D-glucosaminyl-[heparan sulfate](n) + adenosine 3',5'-bisphosphate + 2 H(+). Its pathway is glycan metabolism; heparan sulfate biosynthesis. It participates in glycan metabolism; heparin biosynthesis. Its activity is regulated as follows. Inhibited by long N-sulfated sequences (more than 6 sugar residues) accumulating in its substrates heparan sulfate, and heparin. Its function is as follows. Essential bifunctional enzyme that catalyzes both the N-deacetylation and the N-sulfation of glucosamine (GlcNAc) of the glycosaminoglycan in heparan sulfate. Modifies the GlcNAc-GlcA disaccharide repeating sugar backbone to make N-sulfated heparosan, a prerequisite substrate for later modifications in heparin biosynthesis. Plays a role in determining the extent and pattern of sulfation of heparan sulfate. Participates in biosynthesis of heparan sulfate that can ultimately serve as L-selectin ligands, thereby playing a role in inflammatory response. Required for the exosomal release of SDCBP, CD63 and syndecan. The protein is Bifunctional heparan sulfate N-deacetylase/N-sulfotransferase 1 of Mus musculus (Mouse).